The chain runs to 137 residues: S-adenosylmethionine decarboxylase proenzyme (137 aa).

The Schiff-base intermediate with substrate; via pyruvic acid role is filled by Ser-63. The residue at position 63 (Ser-63) is a Pyruvic acid (Ser); by autocatalysis. His-68 serves as the catalytic Proton acceptor; for processing activity. Cys-83 (proton donor; for catalytic activity) is an active-site residue.

Belongs to the prokaryotic AdoMetDC family. Type 1 subfamily. In terms of assembly, heterotetramer of two alpha and two beta chains arranged as a dimer of alpha/beta heterodimers. Pyruvate is required as a cofactor. In terms of processing, is synthesized initially as an inactive proenzyme. Formation of the active enzyme involves a self-maturation process in which the active site pyruvoyl group is generated from an internal serine residue via an autocatalytic post-translational modification. Two non-identical subunits are generated from the proenzyme in this reaction, and the pyruvate is formed at the N-terminus of the alpha chain, which is derived from the carboxyl end of the proenzyme. The post-translation cleavage follows an unusual pathway, termed non-hydrolytic serinolysis, in which the side chain hydroxyl group of the serine supplies its oxygen atom to form the C-terminus of the beta chain, while the remainder of the serine residue undergoes an oxidative deamination to produce ammonia and the pyruvoyl group blocking the N-terminus of the alpha chain.

The enzyme catalyses S-adenosyl-L-methionine + H(+) = S-adenosyl 3-(methylsulfanyl)propylamine + CO2. The protein operates within amine and polyamine biosynthesis; S-adenosylmethioninamine biosynthesis; S-adenosylmethioninamine from S-adenosyl-L-methionine: step 1/1. Catalyzes the decarboxylation of S-adenosylmethionine to S-adenosylmethioninamine (dcAdoMet), the propylamine donor required for the synthesis of the polyamines spermine and spermidine from the diamine putrescine. This Fervidobacterium nodosum (strain ATCC 35602 / DSM 5306 / Rt17-B1) protein is S-adenosylmethionine decarboxylase proenzyme.